Here is a 260-residue protein sequence, read N- to C-terminus: tRNA (guanine-N(1)-)-methyltransferase (260 aa).

Residues Gly-117 and Leu-137–Leu-142 each bind S-adenosyl-L-methionine.

It belongs to the RNA methyltransferase TrmD family. As to quaternary structure, homodimer.

It localises to the cytoplasm. It carries out the reaction guanosine(37) in tRNA + S-adenosyl-L-methionine = N(1)-methylguanosine(37) in tRNA + S-adenosyl-L-homocysteine + H(+). Specifically methylates guanosine-37 in various tRNAs. The protein is tRNA (guanine-N(1)-)-methyltransferase of Cupriavidus taiwanensis (strain DSM 17343 / BCRC 17206 / CCUG 44338 / CIP 107171 / LMG 19424 / R1) (Ralstonia taiwanensis (strain LMG 19424)).